The primary structure comprises 673 residues: DNA ligase (673 aa).

NAD(+) contacts are provided by residues 33–37 (DYEYD), 82–83 (SL), and Glu113. The active-site N6-AMP-lysine intermediate is Lys115. NAD(+) is bound by residues Arg136, Glu170, Lys285, and Lys309. Zn(2+)-binding residues include Cys403, Cys406, Cys421, and Cys426. A BRCT domain is found at 583 to 672 (AKSDILKGYT…SREEAEKILM (90 aa)).

Belongs to the NAD-dependent DNA ligase family. LigA subfamily. It depends on Mg(2+) as a cofactor. Mn(2+) is required as a cofactor.

The enzyme catalyses NAD(+) + (deoxyribonucleotide)n-3'-hydroxyl + 5'-phospho-(deoxyribonucleotide)m = (deoxyribonucleotide)n+m + AMP + beta-nicotinamide D-nucleotide.. DNA ligase that catalyzes the formation of phosphodiester linkages between 5'-phosphoryl and 3'-hydroxyl groups in double-stranded DNA using NAD as a coenzyme and as the energy source for the reaction. It is essential for DNA replication and repair of damaged DNA. This Caldicellulosiruptor bescii (strain ATCC BAA-1888 / DSM 6725 / KCTC 15123 / Z-1320) (Anaerocellum thermophilum) protein is DNA ligase.